We begin with the raw amino-acid sequence, 669 residues long: Elongation factor G 2 (669 aa).

The tr-type G domain maps to M1 to F276. Residues A10–T17, D74–H78, and N128–D131 contribute to the GTP site.

Belongs to the TRAFAC class translation factor GTPase superfamily. Classic translation factor GTPase family. EF-G/EF-2 subfamily.

The protein resides in the cytoplasm. In terms of biological role, catalyzes the GTP-dependent ribosomal translocation step during translation elongation. During this step, the ribosome changes from the pre-translocational (PRE) to the post-translocational (POST) state as the newly formed A-site-bound peptidyl-tRNA and P-site-bound deacylated tRNA move to the P and E sites, respectively. Catalyzes the coordinated movement of the two tRNA molecules, the mRNA and conformational changes in the ribosome. In Borreliella burgdorferi (strain ATCC 35210 / DSM 4680 / CIP 102532 / B31) (Borrelia burgdorferi), this protein is Elongation factor G 2 (fusB).